A 223-amino-acid chain; its full sequence is Cytidylate kinase (223 aa).

12-20 (GPAGSGKST) contacts ATP.

It belongs to the cytidylate kinase family. Type 1 subfamily.

It localises to the cytoplasm. The enzyme catalyses CMP + ATP = CDP + ADP. It carries out the reaction dCMP + ATP = dCDP + ADP. This is Cytidylate kinase from Onion yellows phytoplasma (strain OY-M).